The chain runs to 129 residues: MAKPAAKTKKKIKRVVTDGVAHVHASFNNTIVTITDRQGNALSWATSGGAGFRGSRKSTPFAAQVAAEKAGRAALDYGVKSLEVRIKGPGPGRESAVRSLNNVGYKITNIIDVTPIPHNGCRPPKKRRV.

It belongs to the universal ribosomal protein uS11 family. Part of the 30S ribosomal subunit. Interacts with proteins S7 and S18. Binds to IF-3.

Its function is as follows. Located on the platform of the 30S subunit, it bridges several disparate RNA helices of the 16S rRNA. Forms part of the Shine-Dalgarno cleft in the 70S ribosome. In Stenotrophomonas maltophilia (strain R551-3), this protein is Small ribosomal subunit protein uS11.